Consider the following 155-residue polypeptide: Small ribosomal subunit protein uS7c (155 aa).

This sequence belongs to the universal ribosomal protein uS7 family. In terms of assembly, part of the 30S ribosomal subunit.

Its subcellular location is the plastid. It is found in the chloroplast. One of the primary rRNA binding proteins, it binds directly to 16S rRNA where it nucleates assembly of the head domain of the 30S subunit. This is Small ribosomal subunit protein uS7c (rps7) from Gunnera chilensis (Chilean rhubarb).